The sequence spans 435 residues: Diaminobutyrate--2-oxoglutarate transaminase (435 aa).

Lysine 266 is subject to N6-(pyridoxal phosphate)lysine.

It belongs to the class-III pyridoxal-phosphate-dependent aminotransferase family. The cofactor is pyridoxal 5'-phosphate.

The enzyme catalyses L-2,4-diaminobutanoate + 2-oxoglutarate = L-aspartate 4-semialdehyde + L-glutamate. It participates in amine and polyamine biosynthesis; ectoine biosynthesis; L-ectoine from L-aspartate 4-semialdehyde: step 1/3. Its function is as follows. Catalyzes reversively the conversion of L-aspartate beta-semialdehyde (ASA) to L-2,4-diaminobutyrate (DABA) by transamination with L-glutamate. This is Diaminobutyrate--2-oxoglutarate transaminase (ectB) from Bordetella bronchiseptica (strain ATCC BAA-588 / NCTC 13252 / RB50) (Alcaligenes bronchisepticus).